The following is a 309-amino-acid chain: D-alanine--D-alanine ligase (309 aa).

The 203-residue stretch at 104–306 (KLLWQSFNLP…YQILVQKILE (203 aa)) folds into the ATP-grasp domain. ATP is bound at residue 137–192 (ISLLGLPIIVKPNQEGSSIGITIVYSYETLYKACKTAFIFDNSILIEKFIYGEEYT). The Mg(2+) site is built by D260, E273, and N275.

The protein belongs to the D-alanine--D-alanine ligase family. Mg(2+) is required as a cofactor. The cofactor is Mn(2+).

The protein resides in the cytoplasm. It carries out the reaction 2 D-alanine + ATP = D-alanyl-D-alanine + ADP + phosphate + H(+). It participates in cell wall biogenesis; peptidoglycan biosynthesis. Its function is as follows. Cell wall formation. This chain is D-alanine--D-alanine ligase, found in Buchnera aphidicola subsp. Baizongia pistaciae (strain Bp).